The chain runs to 137 residues: Putative pre-16S rRNA nuclease (137 aa).

It belongs to the YqgF nuclease family.

The protein localises to the cytoplasm. Functionally, could be a nuclease involved in processing of the 5'-end of pre-16S rRNA. In Clostridium botulinum (strain 657 / Type Ba4), this protein is Putative pre-16S rRNA nuclease.